A 504-amino-acid polypeptide reads, in one-letter code: Sugar transport protein 14 (504 aa).

The Cytoplasmic portion of the chain corresponds to 1 to 25; that stretch reads MAGGALTDEGGLKRAHLYEHRITSY. The next 12 helical transmembrane spans lie at 26–46, 84–104, 121–141, 144–164, 171–191, 205–225, 286–308, 315–337, 352–372, 382–402, 428–448, and 454–474; these read FIFA…DLGV, ILTL…FGAS, VSFF…MLIL, IFLG…LSEM, GTVN…ANLI, LSLG…LVLP, LVIG…ILFY, SLGF…LVVA, FLLL…GVTL, LPKS…LAYG, VVVC…LVSL, and GIFL…YFLL. Residues 475–504 lie on the Cytoplasmic side of the membrane; that stretch reads PETKQVPIEEVYLLWRQHWLWKKYVEDVDE.

It belongs to the major facilitator superfamily. Sugar transporter (TC 2.A.1.1) family.

It localises to the membrane. In terms of biological role, mediates an active uptake of hexoses, probably by sugar/hydrogen symport. The sequence is that of Sugar transport protein 14 (STP14) from Arabidopsis thaliana (Mouse-ear cress).